Here is a 1044-residue protein sequence, read N- to C-terminus: Isoleucine--tRNA ligase (1044 aa).

The 'HIGH' region signature appears at 48 to 58 (PFATGLPHFGH). Residues 594 to 598 (KMSKS) carry the 'KMSKS' region motif. ATP is bound at residue Lys597.

It belongs to the class-I aminoacyl-tRNA synthetase family. IleS type 2 subfamily. Monomer. Requires Zn(2+) as cofactor.

It is found in the cytoplasm. It carries out the reaction tRNA(Ile) + L-isoleucine + ATP = L-isoleucyl-tRNA(Ile) + AMP + diphosphate. Its function is as follows. Catalyzes the attachment of isoleucine to tRNA(Ile). As IleRS can inadvertently accommodate and process structurally similar amino acids such as valine, to avoid such errors it has two additional distinct tRNA(Ile)-dependent editing activities. One activity is designated as 'pretransfer' editing and involves the hydrolysis of activated Val-AMP. The other activity is designated 'posttransfer' editing and involves deacylation of mischarged Val-tRNA(Ile). The polypeptide is Isoleucine--tRNA ligase (Borrelia hermsii (strain HS1 / DAH)).